We begin with the raw amino-acid sequence, 130 residues long: Large ribosomal subunit protein bL21 (130 aa).

A disordered region spans residues 110 to 130 (KTAAQPAADEAVAANEVDSEA). Over residues 112-130 (AAQPAADEAVAANEVDSEA) the composition is skewed to low complexity.

The protein belongs to the bacterial ribosomal protein bL21 family. In terms of assembly, part of the 50S ribosomal subunit. Contacts protein L20.

Its function is as follows. This protein binds to 23S rRNA in the presence of protein L20. The protein is Large ribosomal subunit protein bL21 of Cyanothece sp. (strain PCC 7425 / ATCC 29141).